A 103-amino-acid polypeptide reads, in one-letter code: RNA-binding protein Hfq (103 aa).

The 60-residue stretch at D9–V68 folds into the Sm domain. The interval V63–E103 is disordered. Over residues S81–A96 the composition is skewed to polar residues.

It belongs to the Hfq family. Homohexamer.

RNA chaperone that binds small regulatory RNA (sRNAs) and mRNAs to facilitate mRNA translational regulation in response to envelope stress, environmental stress and changes in metabolite concentrations. Also binds with high specificity to tRNAs. This chain is RNA-binding protein Hfq, found in Enterobacter sp. (strain 638).